We begin with the raw amino-acid sequence, 351 residues long: Peptide chain release factor 1 (351 aa).

Gln229 carries the post-translational modification N5-methylglutamine. The tract at residues 278–297 (RVDDERSADRAAQVGSGDRS) is disordered.

Belongs to the prokaryotic/mitochondrial release factor family. Methylated by PrmC. Methylation increases the termination efficiency of RF1.

Its subcellular location is the cytoplasm. Functionally, peptide chain release factor 1 directs the termination of translation in response to the peptide chain termination codons UAG and UAA. The polypeptide is Peptide chain release factor 1 (Roseobacter denitrificans (strain ATCC 33942 / OCh 114) (Erythrobacter sp. (strain OCh 114))).